Consider the following 300-residue polypeptide: Probable amino-acid ABC transporter periplasmic-binding protein y4tE (300 aa).

Residues 1 to 27 (MTHLKISKTAPAVARFLPAGRIASVAA) form the signal peptide.

It belongs to the bacterial solute-binding protein 3 family.

The protein localises to the periplasm. Functionally, probably part of the binding-protein-dependent transport system y4tEFGH for an amino acid. This is Probable amino-acid ABC transporter periplasmic-binding protein y4tE from Sinorhizobium fredii (strain NBRC 101917 / NGR234).